We begin with the raw amino-acid sequence, 178 residues long: Large ribosomal subunit protein uL6 (178 aa).

This sequence belongs to the universal ribosomal protein uL6 family. As to quaternary structure, part of the 50S ribosomal subunit.

Functionally, this protein binds to the 23S rRNA, and is important in its secondary structure. It is located near the subunit interface in the base of the L7/L12 stalk, and near the tRNA binding site of the peptidyltransferase center. This is Large ribosomal subunit protein uL6 from Nautilia profundicola (strain ATCC BAA-1463 / DSM 18972 / AmH).